The primary structure comprises 683 residues: Glucosylceramidase (683 aa).

Residue Glu254 is the Proton donor of the active site. The active-site Nucleophile is Glu483.

Belongs to the glycosyl hydrolase 5 (cellulase A) family.

It is found in the membrane. The enzyme catalyses a beta-D-glucosyl-(1&lt;-&gt;1')-N-acylsphing-4-enine + H2O = an N-acylsphing-4-enine + D-glucose. Its activity is regulated as follows. Inhibited by metal cations Co(2+), Cu(2+), Ni(2+), Pb(2+) and Zn(2+). Not inhibited by metal chelator ethylenediaminetetraacetic acid (EDTA). Specifically hydrolyzes the glucosidic linkage in glucosylceramide. May prevent accumulation of aberrent glucosylceramide containing immature ceramide. This is Glucosylceramidase from Rhizopus delemar (strain RA 99-880 / ATCC MYA-4621 / FGSC 9543 / NRRL 43880) (Mucormycosis agent).